We begin with the raw amino-acid sequence, 240 residues long: Phosphoenolpyruvate guanylyltransferase (240 aa).

Residues Thr-161, Gly-178, and Ser-181 each contribute to the phosphoenolpyruvate site.

This sequence belongs to the CofC family.

It catalyses the reaction phosphoenolpyruvate + GTP + H(+) = enolpyruvoyl-2-diphospho-5'-guanosine + diphosphate. Its pathway is cofactor biosynthesis; coenzyme F420 biosynthesis. In terms of biological role, guanylyltransferase that catalyzes the activation of phosphoenolpyruvate (PEP) as enolpyruvoyl-2-diphospho-5'-guanosine, via the condensation of PEP with GTP. It is involved in the biosynthesis of coenzyme F420, a hydride carrier cofactor. The chain is Phosphoenolpyruvate guanylyltransferase from Rhodococcus opacus (strain B4).